Reading from the N-terminus, the 1586-residue chain is COP1-interactive protein 1 (1586 aa).

The 75-residue stretch at 10 to 84 (LKSFFEPHFD…RQYDDLTGEI (75 aa)) folds into the NAB domain. The disordered stretch occupies residues 88–119 (VNGKGESSSSSSSDSDSDHSSKRKVKRNGNGK). Coiled-coil stretches lie at residues 128–411 (TGAL…LKES), 437–1196 (ASEL…LKEE), 1225–1336 (LETL…TEAT), and 1372–1406 (MESL…SNQK). LRR repeat units follow at residues 173-187 (SEEI…TEKL), 188-210 (EDEK…VAGK), 216-239 (NQKL…GIKR), 261-285 (TSNL…MNSA), and 287-309 (EENK…GQTT). The segment covering 249-262 (DWKTTSDQLKDETS) has biased composition (basic and acidic residues). The disordered stretch occupies residues 249-286 (DWKTTSDQLKDETSNLKQQLEASEQRVSELTSGMNSAE). The tract at residues 325 to 353 (KEKESEHSSLVELHKTHERESSSQVKELE) is disordered. LRR repeat units lie at residues 384 to 410 (IAEL…QLKE), 437 to 461 (ASEL…LKAA), 473 to 498 (VETM…KLKD), 560 to 586 (IAEL…QLKE), 613 to 637 (VSEL…LKDA), 649 to 674 (LEIM…ELKD), 768 to 792 (LSEL…LNAA), 824 to 850 (LAES…AHKR), 856 to 880 (VKEL…LNSS), 902 to 929 (ESTI…LFSL), 944 to 968 (LRGL…LKAA), 990 to 1014 (QIMV…ESKL), 1077 to 1101 (ISEL…LEDN), 1120 to 1144 (RAEL…SEEA), 1195 to 1220 (EEII…KIKG), 1247 to 1272 (VQMH…NLKN), 1372 to 1396 (MESL…ISNI), 1398 to 1417 (VKLR…LTEK), 1426 to 1448 (AKHL…TYRG), and 1450 to 1474 (IKEI…LTEK). Residues 430-456 (QRDSSTRASELEAQLESSKQQVSDLSA) are disordered. A compositionally biased stretch (polar residues) spans 444–455 (LESSKQQVSDLS). A disordered region spans residues 965 to 985 (LKAAEEESRTMSTKISETSDE). The stretch at 1496–1530 (VIERNHEKEKMNKEIEKKDEEIKKLGGKVREDEKE) forms a coiled coil.

In terms of assembly, interacts with COP1 coiled-coil region. In terms of tissue distribution, mainly expressed in photosynthetic and vascular tissues. Accumulates in both dark-grown and light-grown seedlings roots and shoots, leaves and flowers (at protein level).

The protein localises to the cell membrane. It is found in the cytoplasm. It localises to the cytoskeleton. Functionally, positive regulator of abscisic acid (ABA)-mediated signaling pathways involved in abiotic stress responses (e.g. osmotic stress) and leading to various plant adaptation (e.g. stomata closure). The sequence is that of COP1-interactive protein 1 from Arabidopsis thaliana (Mouse-ear cress).